The chain runs to 362 residues: E3 ubiquitin-protein ligase TM129 (362 aa).

At 1–6 (MDSPEV) the chain is on the lumenal side. Residues 7 to 27 (TFTLAYLVFAVCFVFTPTEFH) form a helical membrane-spanning segment. The Cytoplasmic segment spans residues 28–56 (SAGLTVQNLLSGWLGSEDAAFVPYHLRRT). A helical transmembrane segment spans residues 57–77 (AATLLCHSLLPLGYYVGMCFA). Topologically, residues 78–94 (ASEKQLYYPSQTPETWR) are lumenal. A helical transmembrane segment spans residues 95-115 (AFLLLALMLPAIACTLIYYWS). Topologically, residues 116 to 362 (RDHWACHPLA…FCVLDVCAVR (247 aa)) are cytoplasmic. The segment at 285–350 (CIGCMQTQAS…ASRVPCPTCR (66 aa)) adopts an RING-type; degenerate zinc-finger fold.

Belongs to the TMEM129 family. As to quaternary structure, integral component of ER-resident dislocation complexes.

It is found in the endoplasmic reticulum membrane. The enzyme catalyses S-ubiquitinyl-[E2 ubiquitin-conjugating enzyme]-L-cysteine + [acceptor protein]-L-lysine = [E2 ubiquitin-conjugating enzyme]-L-cysteine + N(6)-ubiquitinyl-[acceptor protein]-L-lysine.. It participates in protein modification; protein ubiquitination. Its function is as follows. E3 ubiquitin-protein ligase involved in ER-associated protein degradation, preferentially associates with the E2 enzyme UBE2J2. Exploited by viral US11 proteins to mediate HLA class I proteins degradation. This is E3 ubiquitin-protein ligase TM129 (TMEM129) from Bos taurus (Bovine).